A 524-amino-acid polypeptide reads, in one-letter code: Strychnine-10-hydroxylase (524 aa).

A helical membrane pass occupies residues 6 to 26 (LYIHTAILGLISLFLILHFVF). Cys466 is a heme binding site.

The protein belongs to the cytochrome P450 family. The cofactor is heme.

Its subcellular location is the membrane. It carries out the reaction strychnine + reduced [NADPH--hemoprotein reductase] + O2 = 10-hydroxystrychnine + oxidized [NADPH--hemoprotein reductase] + H2O + H(+). Its pathway is alkaloid biosynthesis. Its function is as follows. Monooxygenase involved in the biosynthesis of curare monoterpene indole alkaloids (MIAs), natural products such as strychnine, a neurotoxic compound used as a pesticide to control rodents, and its pharmacologically active derivatives, including brucine, used to regulate blood pressure. Curare alkaloids act as animal glycine receptor antagonists. Catalyzes the conversion of strychnine to 10-OH strychnine. This chain is Strychnine-10-hydroxylase, found in Strychnos nux-vomica (Poison nut).